Here is a 387-residue protein sequence, read N- to C-terminus: Cystathionine beta-lyase (387 aa).

K204 carries the post-translational modification N6-(pyridoxal phosphate)lysine.

This sequence belongs to the trans-sulfuration enzymes family. In terms of assembly, homotetramer. Pyridoxal 5'-phosphate is required as a cofactor.

It is found in the cytoplasm. The catalysed reaction is L,L-cystathionine + H2O = L-homocysteine + pyruvate + NH4(+). It catalyses the reaction an S-substituted L-cysteine + H2O = a thiol + pyruvate + NH4(+). Its pathway is amino-acid biosynthesis; L-methionine biosynthesis via de novo pathway; L-homocysteine from L-cystathionine: step 1/1. Functionally, catalyzes the cleavage of cystathionine to homocysteine, pyruvate and ammonia during methionine biosynthesis. This chain is Cystathionine beta-lyase (metC), found in Coxiella burnetii (strain RSA 493 / Nine Mile phase I).